Here is a 508-residue protein sequence, read N- to C-terminus: UTP--glucose-1-phosphate uridylyltransferase (508 aa).

The residue at position 13 (S13) is a Phosphoserine. UTP is bound by residues 113 to 116, K127, Q190, and G222; that span reads LNGG. 115–116 provides a ligand contact to substrate; that stretch reads GG. K127 provides a ligand contact to Mg(2+). Residues H223 and 251–253 contribute to the substrate site; that span reads NID. The UTP site is built by D253 and K396. Residue D253 coordinates Mg(2+). The active site involves K396. T426 bears the Phosphothreonine mark. S434 is subject to Phosphoserine. K438 is subject to N6-acetyllysine. 2 positions are modified to phosphoserine: S448 and S461. The oligomerization stretch occupies residues 457 to 508; sequence HLTVSGDVTFGKNVSLKGTVIIIANHGDRIDIPPGAVLENKIVSGNLRILDH. The critical for end-to-end subunit interaction stretch occupies residues 502-503; that stretch reads NL.

Belongs to the UDPGP type 1 family. In terms of assembly, homooctamer.

Its subcellular location is the cytoplasm. The enzyme catalyses alpha-D-glucose 1-phosphate + UTP + H(+) = UDP-alpha-D-glucose + diphosphate. It participates in glycan biosynthesis; glycogen biosynthesis. Its function is as follows. UTP--glucose-1-phosphate uridylyltransferase catalyzing the conversion of glucose-1-phosphate into UDP-glucose, a crucial precursor for the production of glycogen. This is UTP--glucose-1-phosphate uridylyltransferase (UGP2) from Cricetulus griseus (Chinese hamster).